A 315-amino-acid polypeptide reads, in one-letter code: Calumenin (315 aa).

The first 19 residues, 1–19, serve as a signal peptide directing secretion; sequence MDLRQFLMCLSLCTAFALS. Position 44 is a phosphoserine (Ser44). Tyr47 is modified (phosphotyrosine). Thr65 is modified (phosphothreonine). 6 consecutive EF-hand domains span residues 68 to 103, 104 to 139, 151 to 186, 188 to 223, 229 to 264, and 265 to 300; these read ESKE…AQKR, WIYE…YVLD, QMMV…EEYD, MKDI…HDGN, WVKT…SDYD, and HAEA…FVGS. Phosphoserine; by FAM20C is present on Ser69. Ca(2+)-binding residues include Asp81, Asp83, Asp85, Glu92, Asp117, Asn119, Asp121, and Glu128. The N-linked (GlcNAc...) (complex) asparagine glycan is linked to Asn131. Asp164 serves as a coordination point for Ca(2+). Lys165 carries the post-translational modification N6-acetyllysine. Ca(2+)-binding residues include Asp166, Asp168, Glu175, Asp201, Asn203, Asp205, Glu212, Asp242, Asn244, Asp246, Lys248, and Glu253. Thr254 is modified (phosphothreonine). Phosphoserine occurs at positions 261 and 277. Residues Asp278, Asn280, Asp282, Lys284, and Glu289 each coordinate Ca(2+). The Prevents secretion from ER motif lies at 312–315; that stretch reads HDEF.

Belongs to the CREC family. In terms of assembly, interacts with GGCX. As to expression, ubiquitously expressed. Expressed at high levels in heart, placenta and skeletal muscle, at lower levels in lung, kidney and pancreas and at very low levels in brain and liver.

The protein localises to the endoplasmic reticulum membrane. It localises to the golgi apparatus. Its subcellular location is the secreted. The protein resides in the melanosome. It is found in the sarcoplasmic reticulum lumen. Its function is as follows. Involved in regulation of vitamin K-dependent carboxylation of multiple N-terminal glutamate residues. Seems to inhibit gamma-carboxylase GGCX. Binds 7 calcium ions with a low affinity. In Homo sapiens (Human), this protein is Calumenin (CALU).